The chain runs to 561 residues: Putative transport protein YbjL (561 aa).

The next 5 helical transmembrane spans lie at 8-28 (LLNGNYILLLFVVLALGLCLG), 32-52 (LGSVQLGNSIGVLVVSLLLGQ), 66-86 (FMLFIFCVGVEAGPNFFSIFF), 94-114 (MLALVMVGSALLIALGLGKLF), and 158-178 (NLSLGYALTYLIGLVSLIVGA). RCK C-terminal domains lie at 200–288 (RGLD…SFRN) and 292–373 (VFDR…RIGF). A run of 5 helical transmembrane segments spans residues 383 to 403 (LLAFCAFFIIGLMIGMITFQF), 406 to 426 (FSFGIGNAAGLLFAGIMLGFL), 447 to 467 (FGLMVFMAGVGLSAGSGISNG), 475 to 495 (MLIAGLVVSLVPVVICFLFGA), and 540 to 560 (AIANVLLTLAGTLIVIIWPGL).

Belongs to the AAE transporter (TC 2.A.81) family. YbjL subfamily.

It is found in the cell membrane. This is Putative transport protein YbjL from Salmonella agona (strain SL483).